An 89-amino-acid chain; its full sequence is uncharacterized protein (89 aa).

Residues 1-89 enclose the HTH arsR-type domain; that stretch reads MEKYEKAAEI…KEIIKLVDEL (89 aa).

This is an uncharacterized protein from Methanocaldococcus jannaschii (strain ATCC 43067 / DSM 2661 / JAL-1 / JCM 10045 / NBRC 100440) (Methanococcus jannaschii).